The primary structure comprises 65 residues: Small ribosomal subunit protein eS27 (65 aa).

The Zn(2+) site is built by C21, C24, C40, and C43. The C4-type zinc-finger motif lies at 21 to 43; the sequence is CKDCGNVQVVFARPSSVVTCNIC.

Belongs to the eukaryotic ribosomal protein eS27 family. In terms of assembly, part of the 30S ribosomal subunit. The cofactor is Zn(2+).

This Thermoplasma volcanium (strain ATCC 51530 / DSM 4299 / JCM 9571 / NBRC 15438 / GSS1) protein is Small ribosomal subunit protein eS27.